A 381-amino-acid chain; its full sequence is Creatine kinase B-type (381 aa).

Phosphoserine is present on S4. The 88-residue stretch at 11–98 folds into the Phosphagen kinase N-terminal domain; that stretch reads KLRFPAEDEF…FDPIIEERHG (88 aa). Position 35 is a phosphothreonine (T35). K45 is covalently cross-linked (Glycyl lysine isopeptide (Lys-Gly) (interchain with G-Cter in ubiquitin)). Residue V72 coordinates creatine. The span at 96 to 110 shows a compositional bias: basic and acidic residues; sequence RHGGYQPSDEHKTDL. The disordered stretch occupies residues 96–123; that stretch reads RHGGYQPSDEHKTDLNPDNLQGGDDLDP. K107 participates in a covalent cross-link: Glycyl lysine isopeptide (Lys-Gly) (interchain with G-Cter in ubiquitin). Position 125 is a phosphotyrosine (Y125). In terms of domain architecture, Phosphagen kinase C-terminal spans 125–367; sequence YVLSSRVRTG…KLLIEMEQRL (243 aa). ATP is bound by residues 128-132, R130, R132, and H191; that span reads SSRVR. Positions 130–138 are internal MTS-like signal; the sequence is RVRTGRSIR. S199 is subject to Phosphoserine. Residue E232 participates in creatine binding. R236 serves as a coordination point for ATP. The residue at position 269 (Y269) is a 3'-nitrotyrosine. Position 285 (S285) interacts with creatine. R292 is a binding site for ATP. S309 carries the post-translational modification Phosphoserine. ATP-binding positions include R320, 320-325, and D335; that span reads RGTGGV. A Phosphothreonine modification is found at T322. K381 is covalently cross-linked (Glycyl lysine isopeptide (Lys-Gly) (interchain with G-Cter in ubiquitin)).

It belongs to the ATP:guanido phosphotransferase family. As to quaternary structure, dimer of identical or non-identical chains, which can be either B (brain type) or M (muscle type). With MM being the major form in skeletal muscle and myocardium, MB existing in myocardium, and BB existing in many tissues, especially brain. Interacts with SLC12A6 (via C-terminus); the interaction may be required for SLC12A6 potassium-chloride cotransport activity. Ubiquitinated by the ECS(ASB9) complex, leading to its degradation by the proteasome. In terms of tissue distribution, expressed in hippocampus and corpus callosum (at protein level).

The protein localises to the cytoplasm. The protein resides in the cytosol. Its subcellular location is the mitochondrion. It is found in the cell membrane. It carries out the reaction creatine + ATP = N-phosphocreatine + ADP + H(+). In terms of biological role, reversibly catalyzes the transfer of phosphate between ATP and various phosphogens (e.g. creatine phosphate). Creatine kinase isoenzymes play a central role in energy transduction in tissues with large, fluctuating energy demands, such as skeletal muscle, heart, brain and spermatozoa. Acts as a key regulator of adaptive thermogenesis as part of the futile creatine cycle: localizes to the mitochondria of thermogenic fat cells and acts by mediating phosphorylation of creatine to initiate a futile cycle of creatine phosphorylation and dephosphorylation. During the futile creatine cycle, creatine and N-phosphocreatine are in a futile cycle, which dissipates the high energy charge of N-phosphocreatine as heat without performing any mechanical or chemical work. In Mus musculus (Mouse), this protein is Creatine kinase B-type.